A 455-amino-acid chain; its full sequence is Putative PTS system EIIBC component YbbF (455 aa).

Residues 8–90 (HHLAQKILEL…SKLVSAEEGA (83 aa)) form the PTS EIIB type-1 domain. The Phosphocysteine intermediate; for EIIB activity role is filled by Cys30. The region spanning 116–455 (RKIASIFIPL…YKDEMASQFD (340 aa)) is the PTS EIIC type-1 domain. Helical transmembrane passes span 118 to 138 (IASI…ITGI), 154 to 174 (IAII…ILVG), 181 to 201 (FGGT…PEIA), 210 to 230 (LLPG…IAYT), 250 to 270 (VSLL…GGFI), 281 to 301 (ILDI…LPLV), 325 to 345 (LLPI…AVFV), 355 to 375 (AIAG…IFGV), 399 to 419 (YFQV…FLVL), and 423 to 443 (IILY…LTYA).

Its subcellular location is the cell membrane. Its function is as follows. The phosphoenolpyruvate-dependent sugar phosphotransferase system (sugar PTS), a major carbohydrate active -transport system, catalyzes the phosphorylation of incoming sugar substrates concomitantly with their translocation across the cell membrane. The chain is Putative PTS system EIIBC component YbbF (ybbF) from Bacillus subtilis (strain 168).